The following is a 754-amino-acid chain: Probable TonB-dependent siderophore receptor PirA (754 aa).

The N-terminal stretch at 1-24 (MSKRIIQSVLSVSVLASMMSMAFA) is a signal peptide. One can recognise a TBDR plug domain in the interval 54–181 (EQVKQSLGVS…AGGVVNIITK (128 aa)). Residues 186–754 (ETHGSVEFYT…AYYASLKYSF (569 aa)) form the TBDR beta-barrel domain. Positions 404 to 414 (VSTTQGKDSSG) are enriched in polar residues. Residues 404 to 424 (VSTTQGKDSSGSGYGDQLAKG) form a disordered region. A disulfide bridge links Cys-511 with Cys-519. Positions 737–754 (QTYNEPGRAYYASLKYSF) match the TonB C-terminal box motif.

Belongs to the TonB-dependent receptor family.

It localises to the cell outer membrane. In terms of biological role, probably involved in the initial step of iron uptake by binding iron chelating siderophores, thereby allowing extraction of iron from the environment. May bind the siderophore, ferric enterobactin, with micromolar affinity. This is Probable TonB-dependent siderophore receptor PirA from Acinetobacter baumannii (strain ATCC 19606 / DSM 30007 / JCM 6841 / CCUG 19606 / CIP 70.34 / NBRC 109757 / NCIMB 12457 / NCTC 12156 / 81).